A 30-amino-acid chain; its full sequence is Cyclotide hyen-G (30 aa).

A cross-link (cyclopeptide (Gly-Asp)) is located at residues 1–30; that stretch reads GLPCGESCVYIPCISTVLGCSCSNKVCYRD. 3 disulfides stabilise this stretch: C4/C20, C8/C22, and C13/C27.

This is a cyclic peptide. In terms of tissue distribution, detected in stems (at protein level).

Probably participates in a plant defense mechanism. This chain is Cyclotide hyen-G, found in Pigea enneasperma (Spade flower).